A 343-amino-acid chain; its full sequence is N-acetyl-gamma-glutamyl-phosphate reductase (343 aa).

C147 is an active-site residue.

It belongs to the NAGSA dehydrogenase family. Type 1 subfamily.

It is found in the cytoplasm. It carries out the reaction N-acetyl-L-glutamate 5-semialdehyde + phosphate + NADP(+) = N-acetyl-L-glutamyl 5-phosphate + NADPH + H(+). The protein operates within amino-acid biosynthesis; L-arginine biosynthesis; N(2)-acetyl-L-ornithine from L-glutamate: step 3/4. Its function is as follows. Catalyzes the NADPH-dependent reduction of N-acetyl-5-glutamyl phosphate to yield N-acetyl-L-glutamate 5-semialdehyde. The polypeptide is N-acetyl-gamma-glutamyl-phosphate reductase (Listeria monocytogenes serotype 4a (strain HCC23)).